The sequence spans 507 residues: MVTIRADEISNIIRERIEQYNREVTIVNTGTVLQVGDGIARIYGLDEVMAGELVEFAEGTIGIALNLESNNVGVVLMGDGLMIQEGSSVKATGKIAQIPVSEAYLGRVINALANPIDGRGKISASESRLIESPAPGIISRRSVYEPLQTGLIAIDSMIPIGRGQRELIIGDRQTGKTAVATDTILNQQGQNVICVYVAIGQKASSVAQVVTSLQERGAMEYTIVVAETADSPATLQYLAPYTGAALAEYFMYREQHTLIIYDDLSKQAQAYRQMSLLLRRPPGREAYPGDVFYLHSRLLERAAKLSSQLGEGSMTALPIVETQSGDVSAYIPTNVISITDGQIFLSADLFNAGIRPAINVGISVSRVGSAAQIKAMKQVAGKLKLELAQFAELEAFAQFSSDLDKATQNQLARGQRLRELLKQSQSAPLTVEEQIMTIYTGTNGYLDGLEIGQVRKFLVQLRTYLKTNKPQFQEIIASTKTLTAEAESFLKEGIQEQLERFLLQEKL.

An ATP-binding site is contributed by 170–177 (GDRQTGKT). Phosphothreonine is present on T257.

Belongs to the ATPase alpha/beta chains family. F-type ATPases have 2 components, CF(1) - the catalytic core - and CF(0) - the membrane proton channel. CF(1) has five subunits: alpha(3), beta(3), gamma(1), delta(1), epsilon(1). CF(0) has four main subunits: a, b, b' and c.

It is found in the plastid. The protein localises to the chloroplast thylakoid membrane. It catalyses the reaction ATP + H2O + 4 H(+)(in) = ADP + phosphate + 5 H(+)(out). Produces ATP from ADP in the presence of a proton gradient across the membrane. The alpha chain is a regulatory subunit. In Crucihimalaya wallichii (Rock-cress), this protein is ATP synthase subunit alpha, chloroplastic.